Here is an 878-residue protein sequence, read N- to C-terminus: Serine/threonine-protein kinase D2 (878 aa).

Over residues 1 to 12 (MATAPSYPAGLP) the composition is skewed to low complexity. The tract at residues 1–35 (MATAPSYPAGLPGSPGPGSPPPPGGLELQSPPPLL) is disordered. Pro residues predominate over residues 14–35 (SPGPGSPPPPGGLELQSPPPLL). Residue Ser30 is modified to Phosphoserine. Tyr87 carries the post-translational modification Phosphotyrosine. Residues 138–188 (PHALTVHSYRAPAFCDHCGEMLFGLVRQGLKCDGCGLNYHKRCAFSIPNNC) form a Phorbol-ester/DAG-type 1 zinc finger. Residues Ser197, Ser198, Ser200, Ser203, Ser206, Ser212, and Ser214 each carry the phosphoserine modification. Residues 224–247 (RSTTELLPRRPPSSSSSSSASSYT) form a disordered region. Over residues 236 to 245 (SSSSSSSASS) the composition is skewed to low complexity. A Phosphoserine; by CSNK1D and CSNK1E modification is found at Ser244. A Phorbol-ester/DAG-type 2 zinc finger spans residues 264 to 314 (PHTFLIHSYTRPTVCQACKKLLKGLFRQGLQCKDCKFNCHKRCATRVPNDC). A disordered region spans residues 343–373 (ESEDSGVIPGSHSENALHASEEEEGEGGKAQ). The 113-residue stretch at 397–509 (TTLREGWVVH…WETAIRQALM (113 aa)) folds into the PH domain. At Tyr407 the chain carries Phosphotyrosine. Position 438 is a phosphotyrosine; by ABL1 (Tyr438). Ser518 is modified (phosphoserine). One can recognise a Protein kinase domain in the interval 551–807 (IFPDEVLGSG…VDKSLSHPWL (257 aa)). ATP is bound by residues 557-565 (LGSGQFGVV) and Lys580. Asp674 (proton acceptor) is an active-site residue. Ser706 bears the Phosphoserine; by PKC mark. A Phosphoserine modification is found at Ser710. A Phosphotyrosine; by ABL1 modification is found at Tyr717. The short motif at 724-726 (LNQ) is the Important for ABL1-mediated Tyr-717 phosphorylation element. Residues 844-869 (HPLPGSGLPTDRDLGGACPPQDHDMQ) are disordered. Ser876 carries the post-translational modification Phosphoserine; by autocatalysis.

Belongs to the protein kinase superfamily. CAMK Ser/Thr protein kinase family. PKD subfamily. Interacts (via C-terminus) with LCK. Interacts (via N-terminal AP-rich region) with CIB1 isoform 2. Interacts (via N-terminus and zing-finger domain 1 and 2) with PRKCD in response to oxidative stress; the interaction is independent of PRKD2 tyrosine phosphorylation. It depends on Mg(2+) as a cofactor. In terms of processing, phosphorylation of Ser-876 correlates with the activation status of the kinase. Ser-706 or/and Ser-710 are probably phosphorylated by PKC. Phosphorylation at Ser-244 by CSNK1D and CSNK1E promotes nuclear localization and substrate targeting. Phosphorylation at Ser-244, Ser-706 and Ser-710 is required for nuclear localization. Phosphorylated at Tyr-438 by ABL1 in response to oxidative stress. Phosphorylated at Tyr-717 by ABL1 specifically in response to oxidative stress; requires prior phosphorylation at Ser-706 or/and Ser-710. As to expression, widely expressed.

It is found in the cytoplasm. The protein resides in the cell membrane. Its subcellular location is the nucleus. It localises to the golgi apparatus. The protein localises to the trans-Golgi network. It carries out the reaction L-seryl-[protein] + ATP = O-phospho-L-seryl-[protein] + ADP + H(+). It catalyses the reaction L-threonyl-[protein] + ATP = O-phospho-L-threonyl-[protein] + ADP + H(+). Activated by DAG and phorbol esters. Phorbol-ester/DAG-type domains bind DAG, mediating translocation to membranes. Autophosphorylation of Ser-710 and phosphorylation of Ser-706 by PKC relieves auto-inhibition by the PH domain. Catalytic activity is further increased by phosphorylation at Tyr-717 in response to oxidative stress. In terms of biological role, serine/threonine-protein kinase that converts transient diacylglycerol (DAG) signals into prolonged physiological effects downstream of PKC, and is involved in the regulation of cell proliferation via MAPK1/3 (ERK1/2) signaling, oxidative stress-induced NF-kappa-B activation, inhibition of HDAC7 transcriptional repression, signaling downstream of T-cell antigen receptor (TCR) and cytokine production, and plays a role in Golgi membrane trafficking, angiogenesis, secretory granule release and cell adhesion. May potentiate mitogenesis induced by the neuropeptide bombesin by mediating an increase in the duration of MAPK1/3 (ERK1/2) signaling, which leads to accumulation of immediate-early gene products including FOS that stimulate cell cycle progression. In response to oxidative stress, is phosphorylated at Tyr-438 and Tyr-717 by ABL1, which leads to the activation of PRKD2 without increasing its catalytic activity, and mediates activation of NF-kappa-B. In response to the activation of the gastrin receptor CCKBR, is phosphorylated at Ser-244 by CSNK1D and CSNK1E, translocates to the nucleus, phosphorylates HDAC7, leading to nuclear export of HDAC7 and inhibition of HDAC7 transcriptional repression of NR4A1/NUR77. Upon TCR stimulation, is activated independently of ZAP70, translocates from the cytoplasm to the nucleus and is required for interleukin-2 (IL2) promoter up-regulation. During adaptive immune responses, is required in peripheral T-lymphocytes for the production of the effector cytokines IL2 and IFNG after TCR engagement and for optimal induction of antibody responses to antigens. In epithelial cells stimulated with lysophosphatidic acid (LPA), is activated through a PKC-dependent pathway and mediates LPA-stimulated interleukin-8 (IL8) secretion via a NF-kappa-B-dependent pathway. During TCR-induced T-cell activation, interacts with and is activated by the tyrosine kinase LCK, which results in the activation of the NFAT transcription factors. In the trans-Golgi network (TGN), regulates the fission of transport vesicles that are on their way to the plasma membrane and in polarized cells is involved in the transport of proteins from the TGN to the basolateral membrane. Plays an important role in endothelial cell proliferation and migration prior to angiogenesis, partly through modulation of the expression of KDR/VEGFR2 and FGFR1, two key growth factor receptors involved in angiogenesis. In secretory pathway, is required for the release of chromogranin-A (CHGA)-containing secretory granules from the TGN. Downstream of PRKCA, plays important roles in angiotensin-2-induced monocyte adhesion to endothelial cells. Plays a regulatory role in angiogenesis and tumor growth by phosphorylating a downstream mediator CIB1 isoform 2, resulting in vascular endothelial growth factor A (VEGFA) secretion. The chain is Serine/threonine-protein kinase D2 (PRKD2) from Homo sapiens (Human).